A 237-amino-acid polypeptide reads, in one-letter code: Orotidine 5'-phosphate decarboxylase (237 aa).

Substrate-binding positions include Asp17, Lys39, 66 to 75 (DLKLHDIGNT), Thr121, Arg182, Gln191, Gly211, and Arg212. The Proton donor role is filled by Lys68.

Belongs to the OMP decarboxylase family. Type 1 subfamily. Homodimer.

It catalyses the reaction orotidine 5'-phosphate + H(+) = UMP + CO2. The protein operates within pyrimidine metabolism; UMP biosynthesis via de novo pathway; UMP from orotate: step 2/2. Catalyzes the decarboxylation of orotidine 5'-monophosphate (OMP) to uridine 5'-monophosphate (UMP). The sequence is that of Orotidine 5'-phosphate decarboxylase from Rhodopseudomonas palustris (strain TIE-1).